Reading from the N-terminus, the 176-residue chain is NAD(P)H-quinone oxidoreductase subunit 6, chloroplastic (176 aa).

Helical transmembrane passes span 10–30 (ILVL…VLLT), 33–53 (IYSA…YFLL), 60–80 (VAQL…AVMF), 95–115 (IGDG…MTTI), and 152–172 (FYLP…GAIT).

Belongs to the complex I subunit 6 family. NDH is composed of at least 16 different subunits, 5 of which are encoded in the nucleus.

Its subcellular location is the plastid. The protein resides in the chloroplast thylakoid membrane. The catalysed reaction is a plastoquinone + NADH + (n+1) H(+)(in) = a plastoquinol + NAD(+) + n H(+)(out). It carries out the reaction a plastoquinone + NADPH + (n+1) H(+)(in) = a plastoquinol + NADP(+) + n H(+)(out). Its function is as follows. NDH shuttles electrons from NAD(P)H:plastoquinone, via FMN and iron-sulfur (Fe-S) centers, to quinones in the photosynthetic chain and possibly in a chloroplast respiratory chain. The immediate electron acceptor for the enzyme in this species is believed to be plastoquinone. Couples the redox reaction to proton translocation, and thus conserves the redox energy in a proton gradient. This Brachypodium distachyon (Purple false brome) protein is NAD(P)H-quinone oxidoreductase subunit 6, chloroplastic (ndhG).